The sequence spans 152 residues: Ninjurin-1 (152 aa).

Residue methionine 1 is modified to N-acetylmethionine. Residues 1 to 10 (MESGTEEYEL) show a composition bias toward acidic residues. Residues 1-29 (MESGTEEYELNGDLRPGSPGSPDALPPRW) are disordered. Residues 1-78 (MESGTEEYEL…EQGNDFAFFV (78 aa)) are Extracellular-facing. Serine 18 and serine 21 each carry phosphoserine. Positions 26 to 37 (PPRWGLRNRPIN) are N-terminal adhesion motif. The tract at residues 40–69 (HYANKKSAAESMLDIALLMANASQLKAVVE) is required to induce plasma membrane rupture. The segment at 44–55 (KKSAAESMLDIA) is helix alpha1. Residues 58–74 (MANASQLKAVVEQGNDF) are helix alpha2. N-linked (GlcNAc...) asparagine glycosylation is present at asparagine 60. A helical membrane pass occupies residues 79–103 (PLVVLISISLVLQIGVGVLLIFLVK). The Cytoplasmic portion of the chain corresponds to 104–113 (YDLNNPAKHA). The helical transmembrane segment at 114-138 (KLDFLNNLATGLVFIIVVVNIFITA) threads the bilayer. The Extracellular segment spans residues 139–152 (FGVQKPVMDVAPRQ).

This sequence belongs to the ninjurin family. As to quaternary structure, homodimer; in absence of death stimuli, forms an inactive homodimer. Homooligomer; in response to death stimuli, homooligomerizes into long, highly branched filaments and large, ring-shaped structures in the membrane. Post-translationally, cleaved by MMP9 protease to generate the Secreted ninjurin-1 form. N-linked glycosylation is required for homooligomerization.

The protein resides in the cell membrane. Its subcellular location is the synaptic cell membrane. The protein localises to the secreted. In response to death stimuli, homooligomerizes and disrupts membrane integrity by introducing the hydrophilic faces of alpha1 and alpha2 helices into the hydrophobic membrane. Homooligomerization and ability to mediate plasma membrane rupture is inhibited by glycine; it is unclear whether glycine directly or indirectly inhibits homooligomerization. In normal conditions, NINJ1 is autoinhibited via formation of a homodimer: in the inactive homodimer, the alpha1 and alpha2 helices (residues 44-74) form a single transmembrane region without a kink, in which hydrophilic faces of alpha1 and alpha2 helices are sequestered. In terms of biological role, effector of various programmed cell death, such as pyroptosis and necroptosis, which mediates plasma membrane rupture (cytolysis). Oligomerizes in response to death stimuli and forms ring-like structures on the plasma membrane: acts by cutting and shedding membrane disks, like a cookie cutter, leading to membrane damage and loss that cannot be repaired by the cell. Plasma membrane rupture leads to release intracellular molecules named damage-associated molecular patterns (DAMPs) that propagate the inflammatory response. Mechanistically, mediates plasma membrane rupture by introducing hydrophilic faces of 2 alpha helices into the hydrophobic membrane. Induces plasma membrane rupture downstream of Gasdermin (GSDMA, GSDMB, GSDMC, GSDMD, or GSDME) or MLKL during pyroptosis or necroptosis, respectively. Acts as an effector of PANoptosis downstream of CASP1, CASP4, CASP8 and RIPK3. Also induces plasma membrane rupture in response to cell swelling caused by osmotic stress and ferroptosis downstream of lipid peroxidation. Acts as a regulator of Toll-like receptor 4 (TLR4) signaling triggered by lipopolysaccharide (LPS) during systemic inflammation; directly binds LPS. Involved in leukocyte migration during inflammation by promoting transendothelial migration of macrophages via homotypic binding. Promotes the migration of monocytes across the brain endothelium to central nervous system inflammatory lesions. Also acts as a homophilic transmembrane adhesion molecule involved in various processes such as axonal growth, cell chemotaxis and angiogenesis. Promotes cell adhesion by mediating homophilic interactions via its extracellular N-terminal adhesion motif (N-NAM). Involved in the progression of the inflammatory stress by promoting cell-to-cell interactions between immune cells and endothelial cells. Plays a role in nerve regeneration by promoting maturation of Schwann cells. Acts as a regulator of angiogenesis. Promotes the formation of new vessels by mediating the interaction between capillary pericyte cells and endothelial cells. Also mediates vascular functions in penile tissue as well as vascular formation. Promotes osteoclasts development by enhancing the survival of prefusion osteoclasts. Also involved in striated muscle growth and differentiation. Also involved in cell senescence in a p53/TP53 manner, possibly by acting as an indirect regulator of p53/TP53 mRNA translation. Functionally, secreted form generated by cleavage, which has chemotactic activity. Acts as an anti-inflammatory mediator by promoting monocyte recruitment, thereby ameliorating atherosclerosis. This is Ninjurin-1 from Mus musculus (Mouse).